Reading from the N-terminus, the 270-residue chain is MQIPFLHKRKRGKKPSAAAAAARAVDKARYDGTLIARGLTKSYRSRRVVNGVSLVVRRGEAVGLLGPNGAGKTTCFYMITGLVPVDEGSIEINGNDVTTMPMYRRARLGVGYLPQEASIFRGLTVEDNIRAVLEVHDENVDRRESKLNDLLGEFSITHLRKSPAIALSGGERRRLEIARALATDPTFMLLDEPFAGVDPISVADIQALVRHLTSRGIGVLITDHNVRETLGLIDRAYIIHAGEVLTHGRANDIVTNPDVRRLYLGDNFSL.

In terms of domain architecture, ABC transporter spans 34-266; sequence LIARGLTKSY…PDVRRLYLGD (233 aa). 66–73 lines the ATP pocket; that stretch reads GPNGAGKT.

The protein belongs to the ABC transporter superfamily.

This is an uncharacterized protein from Rhizobium meliloti (strain 1021) (Ensifer meliloti).